Here is a 593-residue protein sequence, read N- to C-terminus: NADH-quinone oxidoreductase subunit C/D (593 aa).

The tract at residues Met1–Gln184 is NADH dehydrogenase I subunit C. An NADH dehydrogenase I subunit D region spans residues Asp208–Arg593.

In the N-terminal section; belongs to the complex I 30 kDa subunit family. The protein in the C-terminal section; belongs to the complex I 49 kDa subunit family. In terms of assembly, NDH-1 is composed of 13 different subunits. Subunits NuoB, CD, E, F, and G constitute the peripheral sector of the complex.

It is found in the cell inner membrane. It carries out the reaction a quinone + NADH + 5 H(+)(in) = a quinol + NAD(+) + 4 H(+)(out). Functionally, NDH-1 shuttles electrons from NADH, via FMN and iron-sulfur (Fe-S) centers, to quinones in the respiratory chain. The immediate electron acceptor for the enzyme in this species is believed to be ubiquinone. Couples the redox reaction to proton translocation (for every two electrons transferred, four hydrogen ions are translocated across the cytoplasmic membrane), and thus conserves the redox energy in a proton gradient. This chain is NADH-quinone oxidoreductase subunit C/D, found in Pseudomonas putida (strain ATCC 47054 / DSM 6125 / CFBP 8728 / NCIMB 11950 / KT2440).